Here is a 159-residue protein sequence, read N- to C-terminus: MNILGIDPGSRNLGYCILHWDGKKFSLVEAGLLKIKTKELQEQIVELVEGIDIILKAHQIDEVAIEDIFFAYNPQSVLKLAQFRGALSLKILQEIGYFYEYTPLQVKKAVTGNGKATKEQVAFMVKRLLGIKKEIKPLDITDAMAIAITHLQRVKMRKK.

Residues Asp-7, Glu-66, and Asp-139 contribute to the active site. 3 residues coordinate Mg(2+): Asp-7, Glu-66, and Asp-139.

The protein belongs to the RuvC family. Homodimer which binds Holliday junction (HJ) DNA. The HJ becomes 2-fold symmetrical on binding to RuvC with unstacked arms; it has a different conformation from HJ DNA in complex with RuvA. In the full resolvosome a probable DNA-RuvA(4)-RuvB(12)-RuvC(2) complex forms which resolves the HJ. The cofactor is Mg(2+).

The protein localises to the cytoplasm. The catalysed reaction is Endonucleolytic cleavage at a junction such as a reciprocal single-stranded crossover between two homologous DNA duplexes (Holliday junction).. Its function is as follows. The RuvA-RuvB-RuvC complex processes Holliday junction (HJ) DNA during genetic recombination and DNA repair. Endonuclease that resolves HJ intermediates. Cleaves cruciform DNA by making single-stranded nicks across the HJ at symmetrical positions within the homologous arms, yielding a 5'-phosphate and a 3'-hydroxyl group; requires a central core of homology in the junction. The consensus cleavage sequence is 5'-(A/T)TT(C/G)-3'. Cleavage occurs on the 3'-side of the TT dinucleotide at the point of strand exchange. HJ branch migration catalyzed by RuvA-RuvB allows RuvC to scan DNA until it finds its consensus sequence, where it cleaves and resolves the cruciform DNA. The sequence is that of Crossover junction endodeoxyribonuclease RuvC from Sulfurovum sp. (strain NBC37-1).